The primary structure comprises 259 residues: Protein unc-50 homolog A (259 aa).

The Cytoplasmic portion of the chain corresponds to 1–82 (MLPTTSVSPR…TKDQWARDDP (82 aa)). Residues 83–103 (AFLVLLSIWLCVSTVGFGFVL) form a helical membrane-spanning segment. At 104–112 (DMSFFETFK) the chain is on the lumenal side. Residues 113–133 (LLLWVVFIDCVGVGLLIATLM) traverse the membrane as a helical segment. The Cytoplasmic segment spans residues 134 to 158 (WFVSNKYMVKRQGKDYDVEWGYTFD). Residues 159–179 (VHLNAFYPLLVILHFIQLFFI) form a helical membrane-spanning segment. Residues 180 to 181 (NH) lie on the Lumenal side of the membrane. A helical membrane pass occupies residues 182–202 (VILSGWFIGYFVGNTIWLIAI). The Cytoplasmic segment spans residues 203–222 (GYYIYITFLGYSALPFLKNT). The chain crosses the membrane as a helical span at residues 223–243 (VILLYPFAALALLYVLSLALG). At 244-259 (WNFTEKLCLFYKYRVR) the chain is on the lumenal side.

It belongs to the unc-50 family.

It localises to the nucleus inner membrane. The protein resides in the golgi apparatus membrane. In terms of biological role, involved in the cell surface expression of neuronal nicotinic receptors. Binds RNA. In Xenopus laevis (African clawed frog), this protein is Protein unc-50 homolog A (unc50-a).